The primary structure comprises 80 residues: UPF0291 protein YlaC (80 aa).

It belongs to the UPF0291 family.

The protein resides in the cytoplasm. The polypeptide is UPF0291 protein YlaC (ylcA) (Lactococcus lactis subsp. lactis (strain IL1403) (Streptococcus lactis)).